A 170-amino-acid chain; its full sequence is Protein-export protein SecB (170 aa).

The protein belongs to the SecB family. As to quaternary structure, homotetramer, a dimer of dimers. One homotetramer interacts with 1 SecA dimer.

The protein resides in the cytoplasm. One of the proteins required for the normal export of preproteins out of the cell cytoplasm. It is a molecular chaperone that binds to a subset of precursor proteins, maintaining them in a translocation-competent state. It also specifically binds to its receptor SecA. The polypeptide is Protein-export protein SecB (Xanthomonas axonopodis pv. citri (strain 306)).